A 213-amino-acid polypeptide reads, in one-letter code: uncharacterized protein (213 aa).

Coiled-coil stretches lie at residues K54–L78 and V108–K151. Over residues I122–K142 the composition is skewed to basic and acidic residues. The segment at I122–W213 is disordered. Low complexity predominate over residues K146–S188. Positions K189 to N199 are enriched in basic residues.

The protein belongs to the mimivirus R546 family.

This is an uncharacterized protein from Acanthamoeba polyphaga (Amoeba).